The sequence spans 571 residues: Proline--tRNA ligase (571 aa).

Belongs to the class-II aminoacyl-tRNA synthetase family. ProS type 1 subfamily. In terms of assembly, homodimer.

It is found in the cytoplasm. It catalyses the reaction tRNA(Pro) + L-proline + ATP = L-prolyl-tRNA(Pro) + AMP + diphosphate. Its function is as follows. Catalyzes the attachment of proline to tRNA(Pro) in a two-step reaction: proline is first activated by ATP to form Pro-AMP and then transferred to the acceptor end of tRNA(Pro). As ProRS can inadvertently accommodate and process non-cognate amino acids such as alanine and cysteine, to avoid such errors it has two additional distinct editing activities against alanine. One activity is designated as 'pretransfer' editing and involves the tRNA(Pro)-independent hydrolysis of activated Ala-AMP. The other activity is designated 'posttransfer' editing and involves deacylation of mischarged Ala-tRNA(Pro). The misacylated Cys-tRNA(Pro) is not edited by ProRS. The protein is Proline--tRNA ligase of Pseudoalteromonas atlantica (strain T6c / ATCC BAA-1087).